Reading from the N-terminus, the 151-residue chain is 18 kDa heat shock protein (151 aa).

The sHSP domain occupies 38–151 (TFNGNAGFKV…KDNGRRIDIH (114 aa)).

This sequence belongs to the small heat shock protein (HSP20) family.

Functionally, probable chaperone. The sequence is that of 18 kDa heat shock protein (hsp18) from Clostridium acetobutylicum (strain ATCC 824 / DSM 792 / JCM 1419 / IAM 19013 / LMG 5710 / NBRC 13948 / NRRL B-527 / VKM B-1787 / 2291 / W).